The primary structure comprises 395 residues: NAD(P)H-quinone oxidoreductase subunit H, chloroplastic (395 aa).

It belongs to the complex I 49 kDa subunit family. NDH is composed of at least 16 different subunits, 5 of which are encoded in the nucleus.

It localises to the plastid. It is found in the chloroplast thylakoid membrane. It catalyses the reaction a plastoquinone + NADH + (n+1) H(+)(in) = a plastoquinol + NAD(+) + n H(+)(out). The catalysed reaction is a plastoquinone + NADPH + (n+1) H(+)(in) = a plastoquinol + NADP(+) + n H(+)(out). Its function is as follows. NDH shuttles electrons from NAD(P)H:plastoquinone, via FMN and iron-sulfur (Fe-S) centers, to quinones in the photosynthetic chain and possibly in a chloroplast respiratory chain. The immediate electron acceptor for the enzyme in this species is believed to be plastoquinone. Couples the redox reaction to proton translocation, and thus conserves the redox energy in a proton gradient. This Chloranthus spicatus (Chulantree) protein is NAD(P)H-quinone oxidoreductase subunit H, chloroplastic.